We begin with the raw amino-acid sequence, 98 residues long: ESAT-6-like protein EsxK (98 aa).

This sequence belongs to the WXG100 family. CFP-10 subfamily. As to quaternary structure, strongly interacts with EsxL to form a heterodimeric complex under reducing conditions. The complex is regulated by the redox state of EsxL.

It localises to the secreted. The protein is ESAT-6-like protein EsxK of Mycobacterium tuberculosis (strain ATCC 25618 / H37Rv).